A 234-amino-acid polypeptide reads, in one-letter code: Small ribosomal subunit protein uS3 (234 aa).

The KH type-2 domain maps to 39 to 107; sequence IRKMLKERLK…EVHLNLVEVR (69 aa). The segment covering 215–227 has biased composition (basic and acidic residues); that stretch reads QERRLQESGEQRA. The disordered stretch occupies residues 215-234; the sequence is QERRLQESGEQRARSGRQAA.

Belongs to the universal ribosomal protein uS3 family. In terms of assembly, part of the 30S ribosomal subunit. Forms a tight complex with proteins S10 and S14.

Functionally, binds the lower part of the 30S subunit head. Binds mRNA in the 70S ribosome, positioning it for translation. This Maricaulis maris (strain MCS10) (Caulobacter maris) protein is Small ribosomal subunit protein uS3.